The primary structure comprises 250 residues: Probable fimbrial chaperone YfcS (250 aa).

A signal peptide spans 1–28 (MSDLLCSAKLGAMTLALLLSATSLSALA).

Belongs to the periplasmic pilus chaperone family.

The protein resides in the periplasm. Its function is as follows. Part of the yfcOPQRSUV fimbrial operon. Could contribute to adhesion to various surfaces in specific environmental niches. Increases adhesion to eukaryotic T24 bladder epithelial cells in the absence of fim genes. This chain is Probable fimbrial chaperone YfcS (yfcS), found in Escherichia coli (strain K12).